The sequence spans 412 residues: Argininosuccinate synthase (412 aa).

ATP contacts are provided by residues 10–18 and alanine 36; that span reads AYSGGLDTS. Residues tyrosine 87 and serine 92 each contribute to the L-citrulline site. Position 87 is a phosphotyrosine (tyrosine 87). At lysine 112 the chain carries N6-acetyllysine. The residue at position 113 (tyrosine 113) is a Phosphotyrosine. Position 115–123 (115–123) interacts with ATP; it reads SHGATGKGN. Residues threonine 119, asparagine 123, and aspartate 124 each contribute to the L-aspartate site. Asparagine 123 is an L-citrulline binding site. Arginine 127 lines the L-citrulline pocket. Lysine 165 and lysine 176 each carry N6-acetyllysine; by CLOCK. Residues serine 180 and serine 189 each coordinate L-citrulline. Serine 180 is modified (phosphoserine). Threonine 219 carries the post-translational modification Phosphothreonine. The L-citrulline site is built by glutamate 270 and tyrosine 282.

Belongs to the argininosuccinate synthase family. Type 1 subfamily. As to quaternary structure, homotetramer. Interacts with NMRAL1. Interacts with CLOCK; in a circadian manner. Forms tissue-specific complexes with ASL, SLC7A1, HSP90AA1 and nitric oxide synthase NOS1, NOS2 or NOS3; the complex regulates cell-autonomous L-arginine synthesis and citrulline recycling while channeling extracellular L-arginine to nitric oxide synthesis pathway. In terms of processing, acetylated by CLOCK in a circadian manner which negatively regulates its enzyme activity. Deacetylated by histone deacetylases. As to expression, expressed in adult liver.

The protein resides in the cytoplasm. It localises to the cytosol. The enzyme catalyses L-citrulline + L-aspartate + ATP = 2-(N(omega)-L-arginino)succinate + AMP + diphosphate + H(+). It functions in the pathway amino-acid biosynthesis; L-arginine biosynthesis; L-arginine from L-ornithine and carbamoyl phosphate: step 2/3. Its pathway is nitrogen metabolism; urea cycle; (N(omega)-L-arginino)succinate from L-aspartate and L-citrulline: step 1/1. In terms of biological role, one of the enzymes of the urea cycle, the metabolic pathway transforming neurotoxic amonia produced by protein catabolism into inocuous urea in the liver of ureotelic animals. Catalyzes the formation of arginosuccinate from aspartate, citrulline and ATP and together with ASL it is responsible for the biosynthesis of arginine in most body tissues. In Homo sapiens (Human), this protein is Argininosuccinate synthase.